The primary structure comprises 333 residues: Complement C1q and tumor necrosis factor-related protein 9 (333 aa).

Residues Met-1–Ser-19 form the signal peptide. The segment at Thr-22–Gly-194 is disordered. Collagen-like domains are found at residues Arg-24 to Val-82, Ala-84 to Val-130, and Gly-134 to Val-193. Pro-31, Pro-34, and Pro-40 each carry 4-hydroxyproline. The segment covering Arg-42 to Glu-57 has biased composition (basic and acidic residues). Pro-58, Pro-61, and Pro-64 each carry 4-hydroxyproline. Positions Asp-67–Lys-88 are enriched in basic and acidic residues. Residue Lys-73 is modified to 5-hydroxylysine. The O-linked (Gal...) hydroxylysine glycan is linked to Lys-73. 4-hydroxyproline occurs at positions 76 and 115. Position 127 is a 5-hydroxylysine (Lys-127). O-linked (Gal...) hydroxylysine glycosylation occurs at Lys-127. Pro-151, Pro-160, and Pro-175 each carry 4-hydroxyproline. A compositionally biased stretch (basic and acidic residues) spans Trp-183 to Val-193. The region spanning Pro-197–Ser-333 is the C1q domain.

As to quaternary structure, multimers (predominantly trimers). Interacts with ADIPOQ via the C1q domain to form a heterotrimeric complex. The isomeric forms of the hydroxylated amino acids could not be determined in the mass-spectrometric methods reported in PubMed:18787108 but are assumed on the basis of their occurrence in collagen-like domains. In terms of tissue distribution, expressed predominantly in adipose tissue. Females express higher levels than males.

The protein resides in the secreted. Functionally, probable adipokine. Activates AMPK, AKT, and p44/42 MAPK signaling pathways. This chain is Complement C1q and tumor necrosis factor-related protein 9 (C1qtnf9), found in Mus musculus (Mouse).